The chain runs to 356 residues: GDP-mannose:di-myo-inositol-1,3'-phosphate beta-1,2-mannosyltransferase (356 aa).

Belongs to the MDIP synthase family. Requires Mg(2+) as cofactor.

It carries out the reaction bis(myo-inositol) 1,3'-phosphate + GDP-alpha-D-mannose = 2-O-(beta-D-mannosyl)-bis(myo-inositol) 1,3'-phosphate + GDP + H(+). It catalyses the reaction 2-O-(beta-D-mannosyl)-bis(myo-inositol) 1,3'-phosphate + GDP-alpha-D-mannose = 2-O-(beta-D-mannosyl-(1-&gt;2)-beta-D-mannosyl)-bis(myo-inositol) 1,3'-phosphate + GDP + H(+). The enzyme catalyses bis(myo-inositol) 1,3'-phosphate + 2 GDP-alpha-D-mannose = 2-O-(beta-D-mannosyl-(1-&gt;2)-beta-D-mannosyl)-bis(myo-inositol) 1,3'-phosphate + 2 GDP + 2 H(+). Functionally, catalyzes the transfer of the mannosyl group from GDP-mannose to di-myo-inositol-1,3'-phosphate (DIP), producing mannosyl-di-myo-inositol phosphate (MDIP). Can also use MDIP as an acceptor of a second mannose residue, yielding di-mannosyl-di-myo-inositol phosphate (MMDIP). Minor amounts of the tri-mannosylated form are also formed. This Thermotoga maritima (strain ATCC 43589 / DSM 3109 / JCM 10099 / NBRC 100826 / MSB8) protein is GDP-mannose:di-myo-inositol-1,3'-phosphate beta-1,2-mannosyltransferase.